The primary structure comprises 149 residues: MNTGGNNSLPPQTRGEVLFRDQQFFQKQIDSKIMQLLENYHNIIKISKVNDPLKNASEIYEMETRTSNMLNAGEGLLKIIEELKQNLILNDFSTMAEEVRIQNLVFHKENERTNKSIKLISEELSRSLKELEDEYYNSSYKLPPPSSSK.

It belongs to the Mediator complex subunit 22 family. In terms of assembly, component of the Mediator complex.

It localises to the nucleus. Component of the Mediator complex, a coactivator involved in the regulated transcription of nearly all RNA polymerase II-dependent genes. Mediator functions as a bridge to convey information from gene-specific regulatory proteins to the basal RNA polymerase II transcription machinery. Mediator is recruited to promoters by direct interactions with regulatory proteins and serves as a scaffold for the assembly of a functional preinitiation complex with RNA polymerase II and the general transcription factors. The polypeptide is Putative mediator of RNA polymerase II transcription subunit 22 (med22) (Dictyostelium discoideum (Social amoeba)).